A 320-amino-acid chain; its full sequence is Methenyltetrahydromethanopterin cyclohydrolase (320 aa).

This sequence belongs to the MCH family.

The protein localises to the cytoplasm. The enzyme catalyses 5,10-methenyl-5,6,7,8-tetrahydromethanopterin + H2O = N(5)-formyl-5,6,7,8-tetrahydromethanopterin + H(+). Catalyzes the hydrolysis of methenyl-H(4)MPT(+) to 5-formyl-H(4)MPT. This is Methenyltetrahydromethanopterin cyclohydrolase from Methanococcoides burtonii (strain DSM 6242 / NBRC 107633 / OCM 468 / ACE-M).